Reading from the N-terminus, the 351-residue chain is Putative F-box protein At5g52610 (351 aa).

The F-box domain occupies 1–41 (MISEDLLVEILLRLPVKPLARCLCVCKLWATIIRSRYFINL).

The protein is Putative F-box protein At5g52610 of Arabidopsis thaliana (Mouse-ear cress).